A 456-amino-acid chain; its full sequence is Aminotransferase ALD1, chloroplastic (456 aa).

The transit peptide at methionine 1–asparagine 43 directs the protein to the chloroplast. Residues tyrosine 108, alanine 142 to glutamine 143, asparagine 223, aspartate 251, tyrosine 254, serine 281, serine 283, arginine 292, and asparagine 323 contribute to the pyridoxal 5'-phosphate site.

Belongs to the class-I pyridoxal-phosphate-dependent aminotransferase family. LL-diaminopimelate aminotransferase subfamily. Requires pyridoxal 5'-phosphate as cofactor. Highly expressed in senescing leaves, flowers, siliques and seeds.

The protein resides in the plastid. It localises to the chloroplast. Its function is as follows. Aminotransferase involved in local and systemic acquired resistance (SAR) to the bacterial pathogen P.syringae. Required for salicylic acid (SA) and camalexin accumulation upon pathogen infection. Possesses aminotransferase activity in vitro and may generate amino-acid-derived defense signals in vivo. May be involved in ethylene-induced senescence signaling. Involved in the biosynthesis of pipecolate (Pip), a metabolite that orchestrates defense amplification, positive regulation of SA biosynthesis, and priming to guarantee effective local resistance induction and the establishment of SAR. Converts lysine to alpha-keto-epsilon-aminocaproate, which then can spontaneously cyclize to form delta-(1)-piperideine-2-carboxylate (P2C). P2C is converted to Pip by SARD4. May produce non-Pip metabolites that play roles in immunity. Involved in the synthesis of distinct metabolite signals that affect basal and early defenses, and later defense responses. This is Aminotransferase ALD1, chloroplastic from Arabidopsis thaliana (Mouse-ear cress).